A 1123-amino-acid polypeptide reads, in one-letter code: Inner tegument protein (1123 aa).

Disordered regions lie at residues 1–27 (MADR…GPMQ) and 1047–1123 (RPLA…TSYQ). Positions 568 to 1123 (WDITPTTPAT…PTDLPLTSYQ (556 aa)) are interaction with large tegument protein.

It belongs to the herpesviridae inner tegument protein family. As to quaternary structure, interacts (via C-terminus) with the large tegument protein/LTP (via N-terminus). Interacts with host DST. Interacts with host RIGI; this interaction inhibits RIGI activation. Interacts with host CGAS; this interaction inhibits host CGAS activation. Interacts with host TAOK3.

It localises to the virion tegument. The protein localises to the host cytoplasm. It is found in the host nucleus. Its subcellular location is the host Golgi apparatus. The protein resides in the host trans-Golgi network. The catalysed reaction is L-asparaginyl-[protein] + H2O = L-aspartyl-[protein] + NH4(+). The enzyme catalyses L-glutaminyl-[protein] + H2O = L-glutamyl-[protein] + NH4(+). In terms of biological role, plays an essential role in cytoplasmic secondary envelopment during viral egress. Interacts with the capsid via the large tegument protein/LTP and participates in its transport to the host trans-Golgi network (TGN) where secondary envelopment occurs. Modulates tegumentation and capsid accumulation at the viral assembly complex. Plays a role in microtubule-based retrograde axonal transport to promote neuroinvasion. Also plays a role in the inhibition of host immune response by acting as a viral deamidase. Deamidates host RIGI on two asparagines which becomes unable to sense viral dsRNA. In turn, its ability to trigger antiviral immune response and restrict viral replication is inhibited. Also deamidates a critical asparagine on host CGAS which abolishes cGAMP synthesis and downstream innate immune activation. This chain is Inner tegument protein (UL37), found in Homo sapiens (Human).